An 844-amino-acid chain; its full sequence is Meiosis-specific protein PAIR3 (844 aa).

4 disordered regions span residues threonine 41–arginine 389, lysine 418–aspartate 506, aspartate 532–isoleucine 604, and tryptophan 616–lysine 669. A compositionally biased stretch (polar residues) spans glutamine 106–phenylalanine 120. Basic and acidic residues-rich tracts occupy residues threonine 122–aspartate 134 and arginine 145–leucine 164. Polar residues-rich tracts occupy residues glutamine 191–phenylalanine 208 and threonine 218–lysine 229. Basic and acidic residues-rich tracts occupy residues arginine 256 to glycine 270 and alanine 324 to lysine 363. 2 stretches are compositionally biased toward polar residues: residues threonine 364–arginine 382 and serine 420–glutamine 440. Residues lysine 441–alanine 456 are compositionally biased toward basic and acidic residues. Residues asparagine 459–proline 473 are compositionally biased toward low complexity. Over residues arginine 545–aspartate 554 the composition is skewed to polar residues. Basic and acidic residues predominate over residues tryptophan 616–glycine 640. Residues glutamine 646–threonine 661 are compositionally biased toward polar residues. Residues valine 731 to glutamine 765 are a coiled coil.

Expressed in pollen mother cells and the ovule tissues during meiosis.

The protein localises to the chromosome. It localises to the nucleus. Plays a crucial role in homologous chromosome pairing and synapsis in meiosis. Does not seem required for cytokinesis. Is essential for meiotic bouquet formation, homologous chromosome pairing and normal recombination, and synaptonemal complex (SC) assembly. Required for the proper association of PAIR2 with chromosomes. This Oryza sativa subsp. japonica (Rice) protein is Meiosis-specific protein PAIR3.